The chain runs to 1037 residues: Probable aminoglycoside efflux pump (1037 aa).

Residues 1–9 (MANFFIDRP) are Cytoplasmic-facing. Residues 10 to 28 (IFAWVLAILLCLTGTLAIF) form a helical membrane-spanning segment. Residues 29-339 (SLPVEQYPDL…TSFVKASIED (311 aa)) lie on the Periplasmic side of the membrane. Residues 340–359 (VVKTLLEAIALVFLVMYLFL) form a helical membrane-spanning segment. The Cytoplasmic portion of the chain corresponds to 360–365 (QNFRAT). Residues 366-385 (LIPTIAVPVVLMGTFSVLYA) form a helical membrane-spanning segment. The Periplasmic portion of the chain corresponds to 386–391 (FGYSVN). A helical transmembrane segment spans residues 392–413 (TLTMFAMVLAIGLLVDDAIVVV). Residues 414-441 (ENVERIMSEEGLTPREATRKSMGQIQGA) lie on the Cytoplasmic side of the membrane. Residues 442–460 (LVGIAMVLSAVFVPMAFFG) form a helical membrane-spanning segment. The Periplasmic portion of the chain corresponds to 461–473 (GTTGAIYRQFSIT). A helical transmembrane segment spans residues 474-496 (IVAAMVLSVLVAMILTPALCATL). Residues 497 to 537 (LKPLKKGEHHGQKGFFAWFNQMFNRNAERYEKGVAKILHRS) are Cytoplasmic-facing. A helical membrane pass occupies residues 538–556 (LRWIVIYVLLLGGMVFLFL). Residues 557–870 (RLPTSFLPLE…SYQERLSGAQ (314 aa)) lie on the Periplasmic side of the membrane. A helical membrane pass occupies residues 871–890 (APALYAISLLVVFLCLAALY). Residues 891–896 (ESWSVP) lie on the Cytoplasmic side of the membrane. Residues 897–916 (FSVMLVVPLGVIGALLATWM) form a helical membrane-spanning segment. The Periplasmic portion of the chain corresponds to 917-922 (RGLEND). A helical transmembrane segment spans residues 923-944 (VYFQVGLLTVIGLSAKNAILIV). The Cytoplasmic portion of the chain corresponds to 945 to 971 (EFANEMNQKGHDLFEATLHACRQRLRP). A helical membrane pass occupies residues 972-990 (ILMTSLAFIFGVLPMATST). Over 991-1003 (GAGSGGQHAVGTG) the chain is Periplasmic. The helical transmembrane segment at 1004–1026 (VMGGMISATILAIYFVPLFFVLV) threads the bilayer. Over 1027–1037 (RRRFPLKPRPE) the chain is Cytoplasmic.

It belongs to the resistance-nodulation-cell division (RND) (TC 2.A.6) family.

The protein resides in the cell inner membrane. Its function is as follows. Participates in the efflux of aminoglycosides. Confers resistance to a variety of these substances. This chain is Probable aminoglycoside efflux pump (acrD), found in Escherichia coli (strain K12).